The primary structure comprises 269 residues: Tryptophan synthase alpha chain (269 aa).

Active-site proton acceptor residues include Glu50 and Asp61.

This sequence belongs to the TrpA family. In terms of assembly, tetramer of two alpha and two beta chains.

It carries out the reaction (1S,2R)-1-C-(indol-3-yl)glycerol 3-phosphate + L-serine = D-glyceraldehyde 3-phosphate + L-tryptophan + H2O. It functions in the pathway amino-acid biosynthesis; L-tryptophan biosynthesis; L-tryptophan from chorismate: step 5/5. In terms of biological role, the alpha subunit is responsible for the aldol cleavage of indoleglycerol phosphate to indole and glyceraldehyde 3-phosphate. The chain is Tryptophan synthase alpha chain from Francisella tularensis subsp. tularensis (strain WY96-3418).